The sequence spans 310 residues: Low affinity immunoglobulin gamma Fc region receptor II-b (310 aa).

Positions 1–42 are cleaved as a signal peptide; that stretch reads MGILSFLPVLATESDWADCKSPQPWGHMLLWTAVLFLAPVAG. At 43–217 the chain is on the extracellular side; sequence TPAAPPKAVL…KPVTITVQAP (175 aa). Ig-like C2-type domains are found at residues 48–127 and 131–213; these read PKAV…VHLT and EWLV…VTIT. 2 disulfides stabilise this stretch: Cys71-Cys113 and Cys152-Cys196. 3 N-linked (GlcNAc...) asparagine glycosylation sites follow: Asn106, Asn180, and Asn187. The helical transmembrane segment at 218 to 240 threads the bilayer; it reads SSSPMGIIVAVVTGIAVAAIVAA. Residues 241–310 lie on the Cytoplasmic side of the membrane; the sequence is VVALIYCRKK…LEEPDDQNRI (70 aa). The ITIM motif motif lies at 290 to 295; that stretch reads ITYSLL. Position 292 is a phosphotyrosine; by SRC-type Tyr-kinases (Tyr292).

In terms of assembly, interacts with INPP5D/SHIP1. Interacts with FGR. Interacts with LYN. As to quaternary structure, (Microbial infection) Isoform IIB1 interacts with measles virus protein N. Protein N is released in the blood following lysis of measles infected cells. This interaction presumably block inflammatory immune response. In terms of processing, phosphorylated by the SRC-type Tyr-kinases LYN and BLK. Is the most broadly distributed Fc-gamma-receptor. Expressed in monocyte, neutrophils, macrophages, basophils, eosinophils, Langerhans cells, B-cells, platelets cells and placenta (endothelial cells). Not detected in natural killer cells.

It is found in the cell membrane. Functionally, receptor for the Fc region of complexed or aggregated immunoglobulins gamma. Low affinity receptor. Involved in a variety of effector and regulatory functions such as phagocytosis of immune complexes and modulation of antibody production by B-cells. Binding to this receptor results in down-modulation of previous state of cell activation triggered via antigen receptors on B-cells (BCR), T-cells (TCR) or via another Fc receptor. Isoform IIB1 fails to mediate endocytosis or phagocytosis. Isoform IIB2 does not trigger phagocytosis. The protein is Low affinity immunoglobulin gamma Fc region receptor II-b (FCGR2B) of Homo sapiens (Human).